The chain runs to 146 residues: Hemoglobin subunit beta-1 (146 aa).

In terms of domain architecture, Globin spans 2–146 (HWTEKERTII…VVSALGKQYH (145 aa)). Heme b-binding residues include His63 and His92.

Belongs to the globin family. In terms of assembly, hb1 is a heterotetramer of two alpha chains and two beta-1 chains. In terms of tissue distribution, red blood cells.

Its function is as follows. Involved in oxygen transport from gills to the various peripheral tissues. In Dissostichus eleginoides (Patagonian toothfish), this protein is Hemoglobin subunit beta-1.